Reading from the N-terminus, the 262-residue chain is Acyl-[acyl-carrier-protein]--UDP-N-acetylglucosamine O-acyltransferase (262 aa).

It belongs to the transferase hexapeptide repeat family. LpxA subfamily. In terms of assembly, homotrimer.

The protein resides in the cytoplasm. The enzyme catalyses a (3R)-hydroxyacyl-[ACP] + UDP-N-acetyl-alpha-D-glucosamine = a UDP-3-O-[(3R)-3-hydroxyacyl]-N-acetyl-alpha-D-glucosamine + holo-[ACP]. It functions in the pathway glycolipid biosynthesis; lipid IV(A) biosynthesis; lipid IV(A) from (3R)-3-hydroxytetradecanoyl-[acyl-carrier-protein] and UDP-N-acetyl-alpha-D-glucosamine: step 1/6. Functionally, involved in the biosynthesis of lipid A, a phosphorylated glycolipid that anchors the lipopolysaccharide to the outer membrane of the cell. The protein is Acyl-[acyl-carrier-protein]--UDP-N-acetylglucosamine O-acyltransferase of Salmonella heidelberg (strain SL476).